We begin with the raw amino-acid sequence, 213 residues long: ATP phosphoribosyltransferase (213 aa).

The protein belongs to the ATP phosphoribosyltransferase family. Short subfamily. As to quaternary structure, heteromultimer composed of HisG and HisZ subunits.

Its subcellular location is the cytoplasm. The catalysed reaction is 1-(5-phospho-beta-D-ribosyl)-ATP + diphosphate = 5-phospho-alpha-D-ribose 1-diphosphate + ATP. It participates in amino-acid biosynthesis; L-histidine biosynthesis; L-histidine from 5-phospho-alpha-D-ribose 1-diphosphate: step 1/9. Its function is as follows. Catalyzes the condensation of ATP and 5-phosphoribose 1-diphosphate to form N'-(5'-phosphoribosyl)-ATP (PR-ATP). Has a crucial role in the pathway because the rate of histidine biosynthesis seems to be controlled primarily by regulation of HisG enzymatic activity. In Listeria monocytogenes serotype 4a (strain HCC23), this protein is ATP phosphoribosyltransferase.